Consider the following 135-residue polypeptide: Cytochrome c oxidase subunit 2 (135 aa).

Residues H81, C116, C120, and H124 each contribute to the Cu cation site.

Belongs to the cytochrome c oxidase subunit 2 family.

The protein localises to the cell membrane. It catalyses the reaction 4 Fe(II)-[cytochrome c] + O2 + 8 H(+)(in) = 4 Fe(III)-[cytochrome c] + 2 H2O + 4 H(+)(out). Subunits I and II form the functional core of the enzyme complex. Electrons originating in cytochrome c are transferred via heme a and Cu(A) to the binuclear center formed by heme a3 and Cu(B). This Thermus thermophilus protein is Cytochrome c oxidase subunit 2 (cbaB).